We begin with the raw amino-acid sequence, 769 residues long: Wall-associated receptor kinase-like 10 (769 aa).

Positions 1–24 are cleaved as a signal peptide; that stretch reads MSSNCSCSLLSLFSLLLIIDLTVA. Residues 25-358 are Extracellular-facing; it reads SSCPKTCGGI…YTCEYTNHRP (334 aa). N-linked (GlcNAc...) asparagine glycans are attached at residues Asn58, Asn114, Asn134, Asn182, Asn187, Asn237, Asn262, and Asn296. The atypical EGF-like stretch occupies residues 291–351; it reads CLCDYNSTTT…CVNLLGGYTC (61 aa). 3 cysteine pairs are disulfide-bonded: Cys293–Cys305, Cys327–Cys342, and Cys337–Cys351. Residues 359–379 form a helical membrane-spanning segment; sequence LVIGLSTSFSTLVFIGGIYWL. Topologically, residues 380–769 are cytoplasmic; it reads YKFIRRQRRL…RSDVEPLFPR (390 aa). One can recognise a Protein kinase domain in the interval 433–718; it reads FSLTRILGEG…SYSEDMQPYE (286 aa). Residues 439–447 and Lys461 each bind ATP; that span reads LGEGGQGTV. A Phosphotyrosine modification is found at Tyr506. Residue Asp559 is the Proton acceptor of the active site. Residues Thr593 and Thr598 each carry the phosphothreonine modification. Phosphotyrosine is present on Tyr606.

Belongs to the protein kinase superfamily. Ser/Thr protein kinase family.

Its subcellular location is the membrane. The catalysed reaction is L-seryl-[protein] + ATP = O-phospho-L-seryl-[protein] + ADP + H(+). It catalyses the reaction L-threonyl-[protein] + ATP = O-phospho-L-threonyl-[protein] + ADP + H(+). Its function is as follows. Serine/threonine-protein kinase that may function as a signaling receptor of extracellular matrix component. This Arabidopsis thaliana (Mouse-ear cress) protein is Wall-associated receptor kinase-like 10 (WAKL10).